A 174-amino-acid chain; its full sequence is Large ribosomal subunit protein uL10 (174 aa).

Belongs to the universal ribosomal protein uL10 family. In terms of assembly, part of the ribosomal stalk of the 50S ribosomal subunit. The N-terminus interacts with L11 and the large rRNA to form the base of the stalk. The C-terminus forms an elongated spine to which L12 dimers bind in a sequential fashion forming a multimeric L10(L12)X complex.

Its function is as follows. Forms part of the ribosomal stalk, playing a central role in the interaction of the ribosome with GTP-bound translation factors. This is Large ribosomal subunit protein uL10 from Methylobacillus flagellatus (strain ATCC 51484 / DSM 6875 / VKM B-1610 / KT).